A 265-amino-acid chain; its full sequence is MEMO1 family protein Mbar_A1422 (265 aa).

The protein belongs to the MEMO1 family.

In Methanosarcina barkeri (strain Fusaro / DSM 804), this protein is MEMO1 family protein Mbar_A1422.